We begin with the raw amino-acid sequence, 88 residues long: uncharacterized protein (88 aa).

Residues 39–63 (CEECGAPIPQARREAIPGVRLCIHC) form a dksA C4-type zinc finger.

This is an uncharacterized protein from Escherichia coli (strain K12).